A 210-amino-acid polypeptide reads, in one-letter code: Redox-sensing transcriptional repressor Rex (210 aa).

The segment at residues 15-54 is a DNA-binding region (H-T-H motif); that stretch reads LYYRIFKRFNTDGIEKASSKQIADALGIDSATVRRDFSYF. Position 89 to 94 (89 to 94) interacts with NAD(+); that stretch reads GCGNIG.

The protein belongs to the transcriptional regulatory Rex family. In terms of assembly, homodimer.

Its subcellular location is the cytoplasm. Modulates transcription in response to changes in cellular NADH/NAD(+) redox state. This is Redox-sensing transcriptional repressor Rex from Streptococcus agalactiae serotype Ia (strain ATCC 27591 / A909 / CDC SS700).